The chain runs to 121 residues: Large ribosomal subunit protein uL22 (121 aa).

It belongs to the universal ribosomal protein uL22 family. As to quaternary structure, part of the 50S ribosomal subunit.

Functionally, this protein binds specifically to 23S rRNA; its binding is stimulated by other ribosomal proteins, e.g. L4, L17, and L20. It is important during the early stages of 50S assembly. It makes multiple contacts with different domains of the 23S rRNA in the assembled 50S subunit and ribosome. The globular domain of the protein is located near the polypeptide exit tunnel on the outside of the subunit, while an extended beta-hairpin is found that lines the wall of the exit tunnel in the center of the 70S ribosome. The polypeptide is Large ribosomal subunit protein uL22 (Rickettsia massiliae (strain Mtu5)).